Reading from the N-terminus, the 159-residue chain is D-aminoacyl-tRNA deacylase (159 aa).

Positions Gly-146 to Pro-147 match the Gly-cisPro motif, important for rejection of L-amino acids motif.

This sequence belongs to the DTD family. In terms of assembly, homodimer.

The protein localises to the cytoplasm. It carries out the reaction glycyl-tRNA(Ala) + H2O = tRNA(Ala) + glycine + H(+). The catalysed reaction is a D-aminoacyl-tRNA + H2O = a tRNA + a D-alpha-amino acid + H(+). An aminoacyl-tRNA editing enzyme that deacylates mischarged D-aminoacyl-tRNAs. Also deacylates mischarged glycyl-tRNA(Ala), protecting cells against glycine mischarging by AlaRS. Acts via tRNA-based rather than protein-based catalysis; rejects L-amino acids rather than detecting D-amino acids in the active site. By recycling D-aminoacyl-tRNA to D-amino acids and free tRNA molecules, this enzyme counteracts the toxicity associated with the formation of D-aminoacyl-tRNA entities in vivo and helps enforce protein L-homochirality. This Bifidobacterium animalis subsp. lactis (strain AD011) protein is D-aminoacyl-tRNA deacylase.